Consider the following 208-residue polypeptide: Thymidylate kinase (208 aa).

9-16 (GGEGCGKS) is a binding site for ATP.

It belongs to the thymidylate kinase family.

The enzyme catalyses dTMP + ATP = dTDP + ADP. Functionally, phosphorylation of dTMP to form dTDP in both de novo and salvage pathways of dTTP synthesis. The chain is Thymidylate kinase from Dehalococcoides mccartyi (strain ATCC BAA-2100 / JCM 16839 / KCTC 5957 / BAV1).